The primary structure comprises 495 residues: Aspartyl/glutamyl-tRNA(Asn/Gln) amidotransferase subunit B (495 aa).

The protein belongs to the GatB/GatE family. GatB subfamily. As to quaternary structure, heterotrimer of A, B and C subunits.

The catalysed reaction is L-glutamyl-tRNA(Gln) + L-glutamine + ATP + H2O = L-glutaminyl-tRNA(Gln) + L-glutamate + ADP + phosphate + H(+). It carries out the reaction L-aspartyl-tRNA(Asn) + L-glutamine + ATP + H2O = L-asparaginyl-tRNA(Asn) + L-glutamate + ADP + phosphate + 2 H(+). Functionally, allows the formation of correctly charged Asn-tRNA(Asn) or Gln-tRNA(Gln) through the transamidation of misacylated Asp-tRNA(Asn) or Glu-tRNA(Gln) in organisms which lack either or both of asparaginyl-tRNA or glutaminyl-tRNA synthetases. The reaction takes place in the presence of glutamine and ATP through an activated phospho-Asp-tRNA(Asn) or phospho-Glu-tRNA(Gln). This chain is Aspartyl/glutamyl-tRNA(Asn/Gln) amidotransferase subunit B, found in Crocosphaera subtropica (strain ATCC 51142 / BH68) (Cyanothece sp. (strain ATCC 51142)).